The chain runs to 500 residues: Cytochrome P450 71B36 (500 aa).

A helical membrane pass occupies residues 1–21 (MATILFLSLLFLSCILLAAFT). Residue C440 coordinates heme.

It belongs to the cytochrome P450 family. It depends on heme as a cofactor.

The protein localises to the membrane. In Arabidopsis thaliana (Mouse-ear cress), this protein is Cytochrome P450 71B36 (CYP71B36).